We begin with the raw amino-acid sequence, 173 residues long: Nicotinamide-nucleotide adenylyltransferase (173 aa).

Belongs to the archaeal NMN adenylyltransferase family.

The protein resides in the cytoplasm. The enzyme catalyses beta-nicotinamide D-ribonucleotide + ATP + H(+) = diphosphate + NAD(+). It participates in cofactor biosynthesis; NAD(+) biosynthesis; NAD(+) from nicotinamide D-ribonucleotide: step 1/1. The sequence is that of Nicotinamide-nucleotide adenylyltransferase from Methanosarcina mazei (strain ATCC BAA-159 / DSM 3647 / Goe1 / Go1 / JCM 11833 / OCM 88) (Methanosarcina frisia).